The following is a 436-amino-acid chain: Glutamyl-tRNA reductase 2 (436 aa).

Substrate-binding positions include 49-52, Ser-106, 111-113, and Gln-117; these read TCNR and EPQ. The active-site Nucleophile is the Cys-50. 186-191 provides a ligand contact to NADP(+); it reads GAGKMC.

The protein belongs to the glutamyl-tRNA reductase family. Homodimer.

It catalyses the reaction (S)-4-amino-5-oxopentanoate + tRNA(Glu) + NADP(+) = L-glutamyl-tRNA(Glu) + NADPH + H(+). It functions in the pathway porphyrin-containing compound metabolism; protoporphyrin-IX biosynthesis; 5-aminolevulinate from L-glutamyl-tRNA(Glu): step 1/2. In terms of biological role, catalyzes the NADPH-dependent reduction of glutamyl-tRNA(Glu) to glutamate 1-semialdehyde (GSA). The chain is Glutamyl-tRNA reductase 2 from Koribacter versatilis (strain Ellin345).